A 693-amino-acid chain; its full sequence is Elongation factor G (693 aa).

One can recognise a tr-type G domain in the interval 8 to 282 (EKTRNIGIMA…AVIDYLPSPL (275 aa)). GTP is bound by residues 17–24 (AHVDAGKT), 81–85 (DTPGH), and 135–138 (NKMD).

The protein belongs to the TRAFAC class translation factor GTPase superfamily. Classic translation factor GTPase family. EF-G/EF-2 subfamily.

It is found in the cytoplasm. Functionally, catalyzes the GTP-dependent ribosomal translocation step during translation elongation. During this step, the ribosome changes from the pre-translocational (PRE) to the post-translocational (POST) state as the newly formed A-site-bound peptidyl-tRNA and P-site-bound deacylated tRNA move to the P and E sites, respectively. Catalyzes the coordinated movement of the two tRNA molecules, the mRNA and conformational changes in the ribosome. The polypeptide is Elongation factor G (Streptococcus pneumoniae (strain Hungary19A-6)).